We begin with the raw amino-acid sequence, 297 residues long: N-acetylmuramic acid 6-phosphate etherase (297 aa).

The 164-residue stretch at 55 to 218 (ATDALKSGGR…STGAMVKFGK (164 aa)) folds into the SIS domain. E83 (proton donor) is an active-site residue. E114 is an active-site residue.

This sequence belongs to the GCKR-like family. MurNAc-6-P etherase subfamily. Homodimer.

The enzyme catalyses N-acetyl-D-muramate 6-phosphate + H2O = N-acetyl-D-glucosamine 6-phosphate + (R)-lactate. Its pathway is amino-sugar metabolism; 1,6-anhydro-N-acetylmuramate degradation. The protein operates within amino-sugar metabolism; N-acetylmuramate degradation. It functions in the pathway cell wall biogenesis; peptidoglycan recycling. Functionally, specifically catalyzes the cleavage of the D-lactyl ether substituent of MurNAc 6-phosphate, producing GlcNAc 6-phosphate and D-lactate. Together with AnmK, is also required for the utilization of anhydro-N-acetylmuramic acid (anhMurNAc) either imported from the medium or derived from its own cell wall murein, and thus plays a role in cell wall recycling. The polypeptide is N-acetylmuramic acid 6-phosphate etherase (Enterobacter sp. (strain 638)).